Consider the following 374-residue polypeptide: Zinc finger CCCH domain-containing protein 15 homolog (374 aa).

C3H1-type zinc fingers lie at residues 89–116 and 167–197; these read DPKS…HDLA and YFLE…HCLP.

It belongs to the ZC3H15/TMA46 family.

In Caenorhabditis briggsae, this protein is Zinc finger CCCH domain-containing protein 15 homolog.